The chain runs to 120 residues: UPF0231 protein YacL (120 aa).

The protein belongs to the UPF0231 family.

The protein is UPF0231 protein YacL of Salmonella typhi.